Here is an 87-residue protein sequence, read N- to C-terminus: Exodeoxyribonuclease 7 small subunit (87 aa).

The protein belongs to the XseB family. Heterooligomer composed of large and small subunits.

Its subcellular location is the cytoplasm. It catalyses the reaction Exonucleolytic cleavage in either 5'- to 3'- or 3'- to 5'-direction to yield nucleoside 5'-phosphates.. In terms of biological role, bidirectionally degrades single-stranded DNA into large acid-insoluble oligonucleotides, which are then degraded further into small acid-soluble oligonucleotides. This chain is Exodeoxyribonuclease 7 small subunit, found in Serratia proteamaculans (strain 568).